We begin with the raw amino-acid sequence, 492 residues long: Bifunctional purine biosynthesis protein PurH (492 aa).

Residues 1 to 144 enclose the MGS-like domain; the sequence is MKKAILSVSN…KNFKHVITVV (144 aa).

Belongs to the PurH family.

The enzyme catalyses (6R)-10-formyltetrahydrofolate + 5-amino-1-(5-phospho-beta-D-ribosyl)imidazole-4-carboxamide = 5-formamido-1-(5-phospho-D-ribosyl)imidazole-4-carboxamide + (6S)-5,6,7,8-tetrahydrofolate. It catalyses the reaction IMP + H2O = 5-formamido-1-(5-phospho-D-ribosyl)imidazole-4-carboxamide. The protein operates within purine metabolism; IMP biosynthesis via de novo pathway; 5-formamido-1-(5-phospho-D-ribosyl)imidazole-4-carboxamide from 5-amino-1-(5-phospho-D-ribosyl)imidazole-4-carboxamide (10-formyl THF route): step 1/1. Its pathway is purine metabolism; IMP biosynthesis via de novo pathway; IMP from 5-formamido-1-(5-phospho-D-ribosyl)imidazole-4-carboxamide: step 1/1. This is Bifunctional purine biosynthesis protein PurH from Staphylococcus saprophyticus subsp. saprophyticus (strain ATCC 15305 / DSM 20229 / NCIMB 8711 / NCTC 7292 / S-41).